Reading from the N-terminus, the 595-residue chain is ATPase family AAA domain-containing protein 3 (595 aa).

The disordered stretch occupies residues 1–48; it reads MSWLFGVQKNATPQIPDDFQAGAAPGGPQQPGQGQRQEGNSKMAYSFD. The Mitochondrial intermembrane portion of the chain corresponds to 1-243; sequence MSWLFGVQKN…LNQFLNDKTK (243 aa). The span at 20–35 shows a compositional bias: low complexity; the sequence is QAGAAPGGPQQPGQGQ. 2 coiled-coil regions span residues 80–107 and 140–175; these read VTRQ…HIRV and EELA…EHEL. Residues 244-260 traverse the membrane as a helical segment; the sequence is IAAAVGGLTALAVGWYT. Over 261-595 the chain is Mitochondrial matrix; sequence AKRGTGVTAR…GTTLKRETAV (335 aa). 349-356 contributes to the ATP binding site; the sequence is GPPGTGKT. The PDZ-binding signature appears at 592 to 595; the sequence is ETAV.

The protein belongs to the AAA ATPase family.

Its subcellular location is the mitochondrion inner membrane. The protein localises to the mitochondrion matrix. It localises to the mitochondrion nucleoid. In terms of biological role, essential for mitochondrial network organization, mitochondrial metabolism and cell growth at organism and cellular level. Important during development for the up-regulation of mitochondrial activity during the transition to higher larval stages. Regulates mitochondrial iron homeostasis. May play an important role in mitochondrial protein synthesis. May also participate in mitochondrial DNA replication. May bind to mitochondrial DNA D-loops and contribute to nucleoid stability. Plays a role in regulating the production of reactive oxygen species in response to heat stress. The chain is ATPase family AAA domain-containing protein 3 from Caenorhabditis elegans.